Here is a 121-residue protein sequence, read N- to C-terminus: Large ribosomal subunit protein uL14 (121 aa).

Belongs to the universal ribosomal protein uL14 family. In terms of assembly, part of the 50S ribosomal subunit. Forms a cluster with proteins L3 and L19. In the 70S ribosome, L14 and L19 interact and together make contacts with the 16S rRNA in bridges B5 and B8.

Its function is as follows. Binds to 23S rRNA. Forms part of two intersubunit bridges in the 70S ribosome. This is Large ribosomal subunit protein uL14 from Synechococcus sp. (strain CC9605).